We begin with the raw amino-acid sequence, 71 residues long: Small ribosomal subunit protein bS21 (71 aa).

Residues T43 to Y71 are disordered. Over residues K46–K59 the composition is skewed to basic residues. Residues L60–Y71 show a composition bias toward basic and acidic residues.

The protein belongs to the bacterial ribosomal protein bS21 family.

This is Small ribosomal subunit protein bS21 from Pectobacterium atrosepticum (strain SCRI 1043 / ATCC BAA-672) (Erwinia carotovora subsp. atroseptica).